Here is an 885-residue protein sequence, read N- to C-terminus: Exosome complex component 10 (885 aa).

The span at 1-10 (MAPPSPREHQ) shows a compositional bias: basic and acidic residues. 2 disordered regions span residues 1-23 (MAPP…PDAE) and 210-232 (KPLP…EDLD). Lys-19 participates in a covalent cross-link: Glycyl lysine isopeptide (Lys-Gly) (interchain with G-Cter in SUMO2). The segment covering 217-230 (SKERRERPQDRPED) has biased composition (basic and acidic residues). The 3'-5' exonuclease domain maps to 289-455 (HVVSSLDELV…YIYDRMRLEL (167 aa)). Mg(2+) is bound by residues Asp-313, Glu-315, Asp-371, and Asp-440. Positions 503–583 (NSQQLTAFQL…QQAREMPLLK (81 aa)) constitute an HRDC domain. Residue Lys-583 forms a Glycyl lysine isopeptide (Lys-Gly) (interchain with G-Cter in SUMO1); alternate linkage. Lys-583 is covalently cross-linked (Glycyl lysine isopeptide (Lys-Gly) (interchain with G-Cter in SUMO2); alternate). Residue Lys-710 forms a Glycyl lysine isopeptide (Lys-Gly) (interchain with G-Cter in SUMO2) linkage. Positions 730 to 885 (VQKEPKEAAK…RGFRHNWPKR (156 aa)) are disordered. Composition is skewed to basic and acidic residues over residues 732–756 (KEPK…KEES) and 776–794 (ATKK…EQKQ). Position 821 is a phosphoserine (Ser-821). Residues Lys-833, Lys-859, and Lys-873 each participate in a glycyl lysine isopeptide (Lys-Gly) (interchain with G-Cter in SUMO2) cross-link.

It belongs to the exosome component 10/RRP6 family. As to quaternary structure, component of the RNA exosome complex. The catalytically inactive RNA exosome core complex (Exo-9) associates with the catalytic subunit EXOSC10/RRP6 (via its N-terminus). Exo-9 may associate with DIS3 to form the nucleolar exosome complex, or DIS3L to form the cytoplasmic exosome complex. The RNA exosome complex interacts with cofactors C1D/RRP47, MPHOSPH6/MPP6 and MTREX/MTR4. Interacts with MTREX; the interaction with MTREX mediates the association of MTREX with nuclear RNA exosomes. Part of the small subunit (SSU) processome, composed of more than 70 proteins and the RNA chaperone small nucleolar RNA (snoRNA) U3. Interacts with ALYREF/THOC4. Interacts with DHX36; this interaction occurs in a RNase-insensitive manner. Interacts with NRDE2. Interacts (via C-terminus) with USP36 (via C-terminus); the interaction is facilitated by the association with RNA and promotes sumoylation of EXOSC10. Mg(2+) is required as a cofactor. Post-translationally, sumoylated by USP36; sumoylation does not significantly affect EXOSC10 nucleolar localization and association with core exosome and USP36, but regulates the nucleolar RNA exosome activity in rRNA processing by promoting binding of EXOSC10 to pre-rRNAs. Effects of sumoylation on EXOSC10 levels vary between different studies. Sumoylation of EXOSC10 is required for the modulation of EXOSC10 effects on cellular protein translation and cell proliferation. Sumoylation is promoted by mild hypothermia. Expressed in testis (at protein level).

It localises to the cytoplasm. The protein resides in the nucleus. The protein localises to the nucleolus. Its subcellular location is the nucleoplasm. Its function is as follows. Catalytic component of the RNA exosome complex which has 3'-&gt;5' exoribonuclease activity and participates in a multitude of cellular RNA processing and degradation events. In the nucleus, the RNA exosome complex is involved in proper maturation of stable RNA species such as rRNA, snRNA and snoRNA, in the elimination of RNA processing by-products and non-coding 'pervasive' transcripts, such as antisense RNA species and promoter-upstream transcripts (PROMPTs), and of mRNAs with processing defects, thereby limiting or excluding their export to the cytoplasm. Part of the small subunit (SSU) processome, first precursor of the small eukaryotic ribosomal subunit. During the assembly of the SSU processome in the nucleolus, many ribosome biogenesis factors, an RNA chaperone and ribosomal proteins associate with the nascent pre-rRNA and work in concert to generate RNA folding, modifications, rearrangements and cleavage as well as targeted degradation of pre-ribosomal RNA by the RNA exosome. The RNA exosome may be involved in Ig class switch recombination (CSR) and/or Ig variable region somatic hypermutation (SHM) by targeting AICDA deamination activity to transcribed dsDNA substrates. In the cytoplasm, the RNA exosome complex is involved in general mRNA turnover and specifically degrades inherently unstable mRNAs containing AU-rich elements (AREs) within their 3' untranslated regions, and in RNA surveillance pathways, preventing translation of aberrant mRNAs. It seems to be involved in degradation of histone mRNA. EXOSC10 is required for nucleolar localization of C1D and probably mediates the association of MTREX, C1D and MPHOSPH6 with the RNA exosome involved in the maturation of 5.8S rRNA. Plays a role in the recruitment of replication protein A complex (RPA) and RAD51 to DNA double-strand breaks caused by irradiation, contributing to DNA repair by homologous recombination. Regulates levels of damage-induced RNAs in order to prevent DNA-RNA hybrid formation at DNA double-strand breaks and limit DNA end resection after damage. Plays a role in oocyte development, maturation and survival. Required for normal testis development and mitotic division of spermatogonia. Plays a role in proper embryo development. Required for global protein translation. Required for cell proliferation. In Rattus norvegicus (Rat), this protein is Exosome complex component 10.